The sequence spans 166 residues: Regulatory protein RecX (166 aa).

It belongs to the RecX family.

It is found in the cytoplasm. Its function is as follows. Modulates RecA activity. This is Regulatory protein RecX from Salmonella arizonae (strain ATCC BAA-731 / CDC346-86 / RSK2980).